Consider the following 580-residue polypeptide: Protein O-linked-mannose beta-1,4-N-acetylglucosaminyltransferase 2 (580 aa).

Over 1 to 4 (MHLS) the chain is Cytoplasmic. Residues 5 to 25 (AVFNALLVSVLAAVLWKHVRL) traverse the membrane as a helical; Signal-anchor for type II membrane protein segment. The Lumenal segment spans residues 26-580 (REHAATLEEE…PFADVLVCNT (555 aa)). Residues asparagine 99 and asparagine 276 are each glycosylated (N-linked (GlcNAc...) asparagine). The 93-residue stretch at 488–580 (ARCQASVHGA…PFADVLVCNT (93 aa)) folds into the Fibronectin type-III domain.

It belongs to the glycosyltransferase 61 family. As to expression, highly expressed in the brain, muscle, heart, and kidney in both fetus and adult. In the brain, highest expression in the cortex and cerebellum. Highly expressed in the pancreas.

It is found in the endoplasmic reticulum membrane. The enzyme catalyses 3-O-(alpha-D-mannosyl)-L-threonyl-[protein] + UDP-N-acetyl-alpha-D-glucosamine = 3-O-(N-acetyl-beta-D-glucosaminyl-(1-&gt;4)-alpha-D-mannosyl)-L-threonyl-[protein] + UDP + H(+). Its pathway is protein modification; protein glycosylation. Its function is as follows. O-linked mannose beta-1,4-N-acetylglucosaminyltransferase that transfers UDP-N-acetyl-D-glucosamine to the 4-position of the mannose to generate N-acetyl-D-glucosamine-beta-1,4-O-D-mannosylprotein. Involved in the biosynthesis of the phosphorylated O-mannosyl trisaccharide (N-acetylgalactosamine-beta-3-N-acetylglucosamine-beta-4-(phosphate-6-)mannose), a carbohydrate structure present in alpha-dystroglycan (DAG1), which is required for binding laminin G-like domain-containing extracellular proteins with high affinity. This chain is Protein O-linked-mannose beta-1,4-N-acetylglucosaminyltransferase 2 (POMGNT2), found in Homo sapiens (Human).